Reading from the N-terminus, the 340-residue chain is Beta-ketoacyl-[acyl-carrier-protein] synthase III (340 aa).

Active-site residues include Cys-122 and His-260. The ACP-binding stretch occupies residues 261 to 265 (QANTR). Residue Asn-291 is part of the active site.

It belongs to the thiolase-like superfamily. FabH family. Homodimer.

It localises to the cytoplasm. The enzyme catalyses malonyl-[ACP] + acetyl-CoA + H(+) = 3-oxobutanoyl-[ACP] + CO2 + CoA. It functions in the pathway lipid metabolism; fatty acid biosynthesis. Functionally, catalyzes the condensation reaction of fatty acid synthesis by the addition to an acyl acceptor of two carbons from malonyl-ACP. Catalyzes the first condensation reaction which initiates fatty acid synthesis and may therefore play a role in governing the total rate of fatty acid production. Possesses both acetoacetyl-ACP synthase and acetyl transacylase activities. Its substrate specificity determines the biosynthesis of branched-chain and/or straight-chain of fatty acids. The polypeptide is Beta-ketoacyl-[acyl-carrier-protein] synthase III (Mycobacteroides abscessus (strain ATCC 19977 / DSM 44196 / CCUG 20993 / CIP 104536 / JCM 13569 / NCTC 13031 / TMC 1543 / L948) (Mycobacterium abscessus)).